The chain runs to 726 residues: Catalase-peroxidase (726 aa).

Residues 90–213 (WHAAGTYRIG…LAAVQMGLIY (124 aa)) constitute a cross-link (tryptophyl-tyrosyl-methioninium (Trp-Tyr) (with M-239)). Histidine 91 (proton acceptor) is an active-site residue. The tryptophyl-tyrosyl-methioninium (Tyr-Met) (with W-90) cross-link spans 213 to 239 (YVNPEGPNGNPDPLAAARDIRETFARM). Heme b is bound at residue histidine 254. The tract at residues 334–359 (AHQWKPKHGAGANTVPDAHDPSKRHA) is disordered.

Belongs to the peroxidase family. Peroxidase/catalase subfamily. In terms of assembly, homodimer or homotetramer. It depends on heme b as a cofactor. Formation of the three residue Trp-Tyr-Met cross-link is important for the catalase, but not the peroxidase activity of the enzyme.

It catalyses the reaction H2O2 + AH2 = A + 2 H2O. The enzyme catalyses 2 H2O2 = O2 + 2 H2O. Functionally, bifunctional enzyme with both catalase and broad-spectrum peroxidase activity. This is Catalase-peroxidase from Bradyrhizobium sp. (strain BTAi1 / ATCC BAA-1182).